A 319-amino-acid chain; its full sequence is MHKLNENDVTPEHIFFERRKIIQSMGLMGAASLLPRFSLAAEKQDSRQALHFAKDHNPQNLLLTPENKVIGYNNFYEFGVDKASPAKYASALKTEPWTLRIEGEVEKPMTFDVHQLMQQLPLEERIYRFRCVEAWSMVIPWIGFELNKLLALVQPTSQAKYVEFETLYEPDSMPGQKNHFFGGGLIYPYVEGLTMAEAMHPLTLLSVGLYGKTLAPQNGAPIRLVVPWKYGFKNIKSIVKITLKSEQPMTTWHHAAPHEYGFYANVNPEVDHPRWSQASERVIGSGGLLSVKRQPTLLFNGYAEQVAHLYQDLDLRTYF.

Residues 1-40 (MHKLNENDVTPEHIFFERRKIIQSMGLMGAASLLPRFSLA) constitute a signal peptide (tat-type signal). Residues Asn73, 76-77 (YE), Cys131, Thr166, Asn218, Arg223, and 234-236 (NIK) contribute to the Mo-molybdopterin site.

It belongs to the MsrP family. As to quaternary structure, heterodimer of a catalytic subunit (MsrP) and a heme-binding subunit (MsrQ). Mo-molybdopterin serves as cofactor. In terms of processing, predicted to be exported by the Tat system. The position of the signal peptide cleavage has not been experimentally proven.

The protein localises to the periplasm. The catalysed reaction is L-methionyl-[protein] + a quinone + H2O = L-methionyl-(S)-S-oxide-[protein] + a quinol. It carries out the reaction L-methionyl-[protein] + a quinone + H2O = L-methionyl-(R)-S-oxide-[protein] + a quinol. Part of the MsrPQ system that repairs oxidized periplasmic proteins containing methionine sulfoxide residues (Met-O), using respiratory chain electrons. Thus protects these proteins from oxidative-stress damage caused by reactive species of oxygen and chlorine generated by the host defense mechanisms. MsrPQ is essential for the maintenance of envelope integrity under bleach stress, rescuing a wide series of structurally unrelated periplasmic proteins from methionine oxidation. The catalytic subunit MsrP is non-stereospecific, being able to reduce both (R-) and (S-) diastereoisomers of methionine sulfoxide. The chain is Protein-methionine-sulfoxide reductase catalytic subunit MsrP from Pasteurella multocida (strain Pm70).